The primary structure comprises 290 residues: UPF0750 membrane protein YpjC (290 aa).

The next 6 helical transmembrane spans lie at 9-29, 47-67, 75-95, 106-126, 146-166, and 179-199; these read NIFFILIGAAIFSFGLVHFNM, ALFHISPSISNLVLNIPIFFI, TMFVYTLVGTVALSLFLSIFQ, DLALAALFAGVFIGAGLGIIF, FGIPMGRTMFAFDACVIILSL, and LVAVFVAARLIDFIQEGGYAA.

It belongs to the UPF0750 family.

The protein resides in the cell membrane. The polypeptide is UPF0750 membrane protein YpjC (ypjC) (Bacillus subtilis (strain 168)).